A 134-amino-acid polypeptide reads, in one-letter code: Small ribosomal subunit protein uS11 (134 aa).

Belongs to the universal ribosomal protein uS11 family. As to quaternary structure, part of the 30S ribosomal subunit. Interacts with proteins S7 and S18. Binds to IF-3.

In terms of biological role, located on the platform of the 30S subunit, it bridges several disparate RNA helices of the 16S rRNA. Forms part of the Shine-Dalgarno cleft in the 70S ribosome. This is Small ribosomal subunit protein uS11 from Polaromonas sp. (strain JS666 / ATCC BAA-500).